The sequence spans 511 residues: GMP synthase [glutamine-hydrolyzing] (511 aa).

Positions 5 to 195 constitute a Glutamine amidotransferase type-1 domain; the sequence is DILVLDFGSQ…AKYACNCESI (191 aa). The active-site Nucleophile is the Cys82. Catalysis depends on residues His169 and Glu171. In terms of domain architecture, GMPS ATP-PPase spans 196 to 386; it reads WNMGSFAKTQ…LGLSKEVVYR (191 aa). 223–229 provides a ligand contact to ATP; the sequence is SGGVDSS.

Homodimer.

It catalyses the reaction XMP + L-glutamine + ATP + H2O = GMP + L-glutamate + AMP + diphosphate + 2 H(+). Its pathway is purine metabolism; GMP biosynthesis; GMP from XMP (L-Gln route): step 1/1. Its function is as follows. Catalyzes the synthesis of GMP from XMP. This chain is GMP synthase [glutamine-hydrolyzing] (guaA), found in Campylobacter jejuni subsp. jejuni serotype O:2 (strain ATCC 700819 / NCTC 11168).